Consider the following 651-residue polypeptide: Macrolide export ATP-binding/permease protein MacB (651 aa).

In terms of domain architecture, ABC transporter spans Ile2–Ala239. Gly38 to Ser45 contributes to the ATP binding site. The next 4 membrane-spanning stretches (helical) occupy residues Phe269 to Gly289, Ile532 to Val552, Ile589 to Ala609, and Met614 to Trp634.

It belongs to the ABC transporter superfamily. Macrolide exporter (TC 3.A.1.122) family. In terms of assembly, homodimer.

It is found in the cell inner membrane. Non-canonical ABC transporter that contains transmembrane domains (TMD), which form a pore in the inner membrane, and an ATP-binding domain (NBD), which is responsible for energy generation. Confers resistance against macrolides. The protein is Macrolide export ATP-binding/permease protein MacB of Chlorobaculum tepidum (strain ATCC 49652 / DSM 12025 / NBRC 103806 / TLS) (Chlorobium tepidum).